Consider the following 365-residue polypeptide: tRNA(Met) cytidine acetate ligase (365 aa).

Residues 7 to 20, Gly-96, Asn-152, and Arg-175 each bind ATP; that span reads IAEF…HKYL.

It belongs to the TmcAL family.

The protein localises to the cytoplasm. It carries out the reaction cytidine(34) in elongator tRNA(Met) + acetate + ATP = N(4)-acetylcytidine(34) in elongator tRNA(Met) + AMP + diphosphate. Functionally, catalyzes the formation of N(4)-acetylcytidine (ac(4)C) at the wobble position of elongator tRNA(Met), using acetate and ATP as substrates. First activates an acetate ion to form acetyladenylate (Ac-AMP) and then transfers the acetyl group to tRNA to form ac(4)C34. In Streptococcus pneumoniae (strain ATCC 700669 / Spain 23F-1), this protein is tRNA(Met) cytidine acetate ligase.